Consider the following 701-residue polypeptide: Elongation factor G (701 aa).

Positions 6-285 constitute a tr-type G domain; the sequence is HKVRNIGIMA…AVVAYLPNPL (280 aa). Residues 15–22, 79–83, and 133–136 each bind GTP; these read AHIDAGKT, DNPGH, and NKMD.

It belongs to the TRAFAC class translation factor GTPase superfamily. Classic translation factor GTPase family. EF-G/EF-2 subfamily.

The protein localises to the cytoplasm. Catalyzes the GTP-dependent ribosomal translocation step during translation elongation. During this step, the ribosome changes from the pre-translocational (PRE) to the post-translocational (POST) state as the newly formed A-site-bound peptidyl-tRNA and P-site-bound deacylated tRNA move to the P and E sites, respectively. Catalyzes the coordinated movement of the two tRNA molecules, the mRNA and conformational changes in the ribosome. This chain is Elongation factor G (fusA), found in Micrococcus luteus (Micrococcus lysodeikticus).